A 311-amino-acid polypeptide reads, in one-letter code: Fluoride export protein 1 (311 aa).

Topologically, residues 1 to 6 are cytoplasmic; sequence MLLTQS. Residues 7–25 form a helical membrane-spanning segment; the sequence is YFCIMSMLGTLARLGLTAL. Topologically, residues 26-29 are extracellular; that stretch reads NTYP. Residues 30-50 traverse the membrane as a helical segment; the sequence is GAPFSGLLWVQFVGCVIMGFC. The Cytoplasmic segment spans residues 51-65; the sequence is QTESVFFPRPKHNAT. The helical transmembrane segment at 66–86 threads the bilayer; the sequence is FLLAITTGFCGSLTTFSSWML. The Extracellular segment spans residues 87-106; it reads QMFTGMANLDPFERRGRGYS. Residues 107–127 traverse the membrane as a helical segment; that stretch reads FLSVVSDFMVTMCIAMSSLIW. Residues 128-154 lie on the Cytoplasmic side of the membrane; it reads GKQIGKTTGQWRIGKVAFAWPIPAHTH. The helical transmembrane segment at 155-175 threads the bilayer; sequence IVVRVLLLLLSICFFVGAAFY. Residues 176–186 lie on the Extracellular side of the membrane; that stretch reads TAYTTNVTHRG. Residue Asn-181 is glycosylated (N-linked (GlcNAc...) asparagine). The chain crosses the membrane as a helical span at residues 187 to 207; the sequence is IGFSLIFSPFAALTRLYLARF. Residues 208 to 212 are Cytoplasmic-facing; that stretch reads LNSPQ. A helical transmembrane segment spans residues 213–233; it reads YFIPYGTLCANVFATLLLSIM. At 234-250 the chain is on the extracellular side; sequence YMIPQITHCTPVSRSVM. A helical transmembrane segment spans residues 251–268; it reads YGIQNGFCAVLSTLSTFS. Residues 269–278 lie on the Cytoplasmic side of the membrane; that stretch reads NELHTMPIKR. Residues 279 to 299 traverse the membrane as a helical segment; the sequence is AYIYCIISVAISFSICVIVDG. Topologically, residues 300–311 are extracellular; the sequence is ATAWGHGYTEKY.

It belongs to the fluoride channel Fluc/FEX (TC 1.A.43) family.

The protein localises to the cell membrane. It catalyses the reaction fluoride(in) = fluoride(out). Fluoride channel required for the rapid expulsion of cytoplasmic fluoride. This chain is Fluoride export protein 1 (fex1), found in Schizosaccharomyces pombe (strain 972 / ATCC 24843) (Fission yeast).